Here is a 239-residue protein sequence, read N- to C-terminus: MATPHINAEMGDFADVVLMPGDPLRAKYIAETFLEDVVQVCDVRNMYGFTGTYKGRKVSVMGHGMGIPSCSIYATELIKDYGVKKIIRVGSCGAVSTDIKVRDVVIGMGACTDSKVNRIRFKGHDFAAIADYKMVKAAEEAAKARGIDVKVGNLFSAELFYTPDPEMFDVMDKYGIVGVEMEAAGIYGVAAEYGAKALTICTVSDHIKTGEQTTSEERQNTFNDMMIVALDSVLLGDAE.

His-5 is a binding site for a purine D-ribonucleoside. Phosphate contacts are provided by residues Gly-21, Arg-25, Arg-44, and 88 to 91 (RVGS). A purine D-ribonucleoside-binding positions include 180-182 (EME) and 204-205 (SD). The active-site Proton donor is the Asp-205.

Belongs to the PNP/UDP phosphorylase family. As to quaternary structure, homohexamer; trimer of homodimers.

It catalyses the reaction a purine D-ribonucleoside + phosphate = a purine nucleobase + alpha-D-ribose 1-phosphate. The enzyme catalyses a purine 2'-deoxy-D-ribonucleoside + phosphate = a purine nucleobase + 2-deoxy-alpha-D-ribose 1-phosphate. Catalyzes the reversible phosphorolytic breakdown of the N-glycosidic bond in the beta-(deoxy)ribonucleoside molecules, with the formation of the corresponding free purine bases and pentose-1-phosphate. This is Purine nucleoside phosphorylase DeoD-type 1 from Vibrio vulnificus (strain CMCP6).